The following is a 621-amino-acid chain: Alpha-actinin-like protein 1 (621 aa).

Calponin-homology (CH) domains follow at residues 8–114 (SVQN…LRFT) and 123–230 (LTAK…HAFS). Residues 86–110 (LTNIGPADIVDGNLKLILGLIWTLI) form an actin-binding region. 3 EF-hand domains span residues 388–419 (LSTI…LGPL), 487–549 (DGIT…EIVM), and 550–618 (EELE…AEDK).

This sequence belongs to the alpha-actinin family.

Its subcellular location is the cytoplasm. It localises to the cytoskeleton. Functionally, binds to actin and is involved in actin-ring formation and organization. Plays a role in cytokinesis and is involved in septation. In Schizosaccharomyces pombe (strain 972 / ATCC 24843) (Fission yeast), this protein is Alpha-actinin-like protein 1 (ain1).